Consider the following 194-residue polypeptide: Lymphocyte antigen 6 complex locus protein G5b (194 aa).

A signal peptide spans 1–18 (MRACVLVHVLTMVGFALG). The UPAR/Ly6 domain occupies 26 to 118 (RTCHLCFLED…SAQHQSTLPG (93 aa)). Cystine bridges form between Cys28-Cys55, Cys31-Cys40, Cys47-Cys73, Cys81-Cys98, and Cys99-Cys104. A glycan (N-linked (GlcNAc...) asparagine) is linked at Asn182.

Post-translationally, N-glycosylated.

Its subcellular location is the secreted. This is Lymphocyte antigen 6 complex locus protein G5b (Ly6g5b) from Rattus norvegicus (Rat).